We begin with the raw amino-acid sequence, 113 residues long: MQAKAVARTVRIAPRKVRLVVDLIRGKQVGEAIAILNHTPKTASPVVEKVLKSAIANAEHNYEMDINSLVVEKVFVDEGPTLKRFRPRAMGRASQINKRTSHITVVVSEKKEG.

The protein belongs to the universal ribosomal protein uL22 family. Part of the 50S ribosomal subunit.

In terms of biological role, this protein binds specifically to 23S rRNA; its binding is stimulated by other ribosomal proteins, e.g. L4, L17, and L20. It is important during the early stages of 50S assembly. It makes multiple contacts with different domains of the 23S rRNA in the assembled 50S subunit and ribosome. Its function is as follows. The globular domain of the protein is located near the polypeptide exit tunnel on the outside of the subunit, while an extended beta-hairpin is found that lines the wall of the exit tunnel in the center of the 70S ribosome. The protein is Large ribosomal subunit protein uL22 of Bacillus thuringiensis subsp. konkukian (strain 97-27).